We begin with the raw amino-acid sequence, 329 residues long: uncharacterized protein (329 aa).

This is an uncharacterized protein from Bacillus subtilis (strain 168).